Consider the following 430-residue polypeptide: tRNA(Ile)-lysidine synthase (430 aa).

27-32 (SGGSDS) provides a ligand contact to ATP.

This sequence belongs to the tRNA(Ile)-lysidine synthase family.

It is found in the cytoplasm. The enzyme catalyses cytidine(34) in tRNA(Ile2) + L-lysine + ATP = lysidine(34) in tRNA(Ile2) + AMP + diphosphate + H(+). Its function is as follows. Ligates lysine onto the cytidine present at position 34 of the AUA codon-specific tRNA(Ile) that contains the anticodon CAU, in an ATP-dependent manner. Cytidine is converted to lysidine, thus changing the amino acid specificity of the tRNA from methionine to isoleucine. The polypeptide is tRNA(Ile)-lysidine synthase (Rickettsia typhi (strain ATCC VR-144 / Wilmington)).